The sequence spans 149 residues: Large ribosomal subunit protein bL9 (149 aa).

Belongs to the bacterial ribosomal protein bL9 family.

In terms of biological role, binds to the 23S rRNA. The sequence is that of Large ribosomal subunit protein bL9 from Ligilactobacillus salivarius (strain UCC118) (Lactobacillus salivarius).